We begin with the raw amino-acid sequence, 467 residues long: GTPase Obg (467 aa).

The 158-residue stretch at 1-158 (MFYDEAKIFV…RWLRLELKLL (158 aa)) folds into the Obg domain. Residues 159–333 (ADVGLVGLPN…LIRATWERLQ (175 aa)) form the OBG-type G domain. GTP is bound by residues 165-172 (GLPNAGKS), 190-194 (FTTLE), 214-217 (DLPG), 285-288 (NKMD), and 314-316 (SAA). 2 residues coordinate Mg(2+): Ser-172 and Thr-192. The OCT domain occupies 352-430 (TLDRSQERWE…VAGRELVWEP (79 aa)).

Belongs to the TRAFAC class OBG-HflX-like GTPase superfamily. OBG GTPase family. In terms of assembly, monomer. It depends on Mg(2+) as a cofactor.

It localises to the cytoplasm. An essential GTPase which binds GTP, GDP and possibly (p)ppGpp with moderate affinity, with high nucleotide exchange rates and a fairly low GTP hydrolysis rate. Plays a role in control of the cell cycle, stress response, ribosome biogenesis and in those bacteria that undergo differentiation, in morphogenesis control. The chain is GTPase Obg from Thermomicrobium roseum (strain ATCC 27502 / DSM 5159 / P-2).